The following is a 240-amino-acid chain: Pyridoxine 5'-phosphate synthase (240 aa).

Asparagine 6 lines the 3-amino-2-oxopropyl phosphate pocket. A 1-deoxy-D-xylulose 5-phosphate-binding site is contributed by aspartate 8–histidine 9. Position 17 (arginine 17) interacts with 3-amino-2-oxopropyl phosphate. Histidine 42 (proton acceptor) is an active-site residue. 1-deoxy-D-xylulose 5-phosphate is bound by residues arginine 44 and histidine 49. Catalysis depends on glutamate 69, which acts as the Proton acceptor. Threonine 99 provides a ligand contact to 1-deoxy-D-xylulose 5-phosphate. Histidine 190 serves as the catalytic Proton donor. Residues glycine 191 and glycine 212 to histidine 213 contribute to the 3-amino-2-oxopropyl phosphate site.

This sequence belongs to the PNP synthase family. Homooctamer; tetramer of dimers.

It localises to the cytoplasm. It catalyses the reaction 3-amino-2-oxopropyl phosphate + 1-deoxy-D-xylulose 5-phosphate = pyridoxine 5'-phosphate + phosphate + 2 H2O + H(+). It functions in the pathway cofactor biosynthesis; pyridoxine 5'-phosphate biosynthesis; pyridoxine 5'-phosphate from D-erythrose 4-phosphate: step 5/5. Its function is as follows. Catalyzes the complicated ring closure reaction between the two acyclic compounds 1-deoxy-D-xylulose-5-phosphate (DXP) and 3-amino-2-oxopropyl phosphate (1-amino-acetone-3-phosphate or AAP) to form pyridoxine 5'-phosphate (PNP) and inorganic phosphate. This Pseudomonas entomophila (strain L48) protein is Pyridoxine 5'-phosphate synthase.